The chain runs to 231 residues: MAAFPNLNSGSGLKKLDEHLLTRSYITGYQASKDDITVFTALSKPPTSEFVNVSRWFNHIDALLRISGVSAEGSGVIVEGSSPITEEAVATPPAADSKDTAAEEEDDDDVDLFGEETEEEKKAAEERAASVKASTKKKESGKSSVLMDIKPWDDETDMKKLEEAVRSIQMEGLFWGASKLVPVGYGIKKLHIMCTIVDDLVSIDTMIEEQLTVEPINEYVQSCDIVAFNKI.

A2 is modified (N-acetylalanine). One can recognise a GST C-terminal domain in the interval 11 to 73 (SGLKKLDEHL…LRISGVSAEG (63 aa)). The interval 82 to 136 (SPITEEAVATPPAADSKDTAAEEEDDDDVDLFGEETEEEKKAAEERAASVKASTK) is disordered. Over residues 102–118 (AEEEDDDDVDLFGEETE) the composition is skewed to acidic residues. Residues 119–129 (EEKKAAEERAA) show a composition bias toward basic and acidic residues.

The protein belongs to the EF-1-beta/EF-1-delta family. EF-1 is composed of 4 subunits: alpha, beta (1B-alpha=beta'), delta (1B-beta), and gamma (1B-gamma).

In terms of biological role, EF-1-beta and EF-1-delta stimulate the exchange of GDP bound to EF-1-alpha to GTP. This is Elongation factor 1-delta 2 from Arabidopsis thaliana (Mouse-ear cress).